A 241-amino-acid chain; its full sequence is Sensory transduction protein LytT (241 aa).

The 115-residue stretch at 3–117 folds into the Response regulatory domain; it reads RVLIVDDEML…RIQQTLKKYK (115 aa). 4-aspartylphosphate is present on Asp54. An HTH LytTR-type domain is found at 137 to 241; the sequence is LALSVGESIV…AKELKKLLHI (105 aa).

In terms of processing, phosphorylated by LytS.

The protein resides in the cytoplasm. Member of the two-component regulatory system LytS/LytT that probably regulates genes involved in cell wall metabolism. In Bacillus subtilis (strain 168), this protein is Sensory transduction protein LytT (lytT).